We begin with the raw amino-acid sequence, 406 residues long: Probable endo-xylogalacturonan hydrolase A (406 aa).

Residues 1–18 (MISLNSIFLLSLVGLSRA) form the signal peptide. The disordered stretch occupies residues 20 to 49 (PSRSETSPDRTIKPRAACTPTAGGSSSTDD). 6 PbH1 repeats span residues 183 to 213 (TSNAQFTSLTMDATSNSDNLPKNTDAFDIGA), 214 to 235 (STYVTISSVAITNDDDCVAFKP), 237 to 257 (ANYVTVENVSCTGSHGISVGS), 266 to 289 (VQNVYARNITMINSSKAAGIKTYP), 299 to 320 (VKNATFEDFIVDGCDYAFQIQS), and 368 to 390 (TCDVTISGFEVKAPSGDAKILCG). D228 serves as the catalytic Proton donor. N244 carries N-linked (GlcNAc...) asparagine glycosylation. H251 is a catalytic residue. N-linked (GlcNAc...) asparagine glycans are attached at residues N273, N278, and N301.

Belongs to the glycosyl hydrolase 28 family.

The protein resides in the secreted. Its function is as follows. Pectinolytic enzyme involved in the degradation of xylogalacturonan (xga), a galacturonan backbone heavily substituted with xylose, and which is one important component of the hairy regions of pectin. Activity requires a galacturonic acid backbone substituted with xylose. This chain is Probable endo-xylogalacturonan hydrolase A (xghA), found in Aspergillus oryzae (strain ATCC 42149 / RIB 40) (Yellow koji mold).